A 101-amino-acid polypeptide reads, in one-letter code: MILEHVLVLSAYLFLIGLYGLIMSRNMVRALMCLELILNAVNMNFVTFSDFFDNSQLKGDIFCIFVIAIAAAEAAIGLAIVSSIYRNRKSTRINQSTLLNK.

Transmembrane regions (helical) follow at residues 2 to 22 (ILEH…YGLI), 32 to 52 (MCLE…SDFF), and 61 to 81 (IFCI…LAIV).

The protein belongs to the complex I subunit 4L family. As to quaternary structure, NDH is composed of at least 16 different subunits, 5 of which are encoded in the nucleus.

It localises to the plastid. Its subcellular location is the chloroplast thylakoid membrane. It catalyses the reaction a plastoquinone + NADH + (n+1) H(+)(in) = a plastoquinol + NAD(+) + n H(+)(out). It carries out the reaction a plastoquinone + NADPH + (n+1) H(+)(in) = a plastoquinol + NADP(+) + n H(+)(out). NDH shuttles electrons from NAD(P)H:plastoquinone, via FMN and iron-sulfur (Fe-S) centers, to quinones in the photosynthetic chain and possibly in a chloroplast respiratory chain. The immediate electron acceptor for the enzyme in this species is believed to be plastoquinone. Couples the redox reaction to proton translocation, and thus conserves the redox energy in a proton gradient. In Olimarabidopsis pumila (Dwarf rocket), this protein is NAD(P)H-quinone oxidoreductase subunit 4L, chloroplastic.